Consider the following 126-residue polypeptide: Regulatory protein MgsR (126 aa).

Cysteine 13 and cysteine 16 are disulfide-bonded.

This sequence belongs to the ArsC family.

The protein localises to the cytoplasm. Activity is controlled at multiple levels. Regulation includes a positive autoregulatory loop on mgsR transcription and a post-translational redox-sensitive activation step by an intramolecular disulfide bond formation in response to ethanol stress. In addition, protein stability is strictly controlled by rapid proteolytic degradation by the ClpXP and ClpCP proteases. The McsB protein-arginine kinase might serve as a proteolytic adapter for the ClpX ATPase in the degradation mechanism of MgsR. Its function is as follows. Regulates transcription of a subregulon within the general stress response. Exerts positive and negative effects in response to ethanol stress. This Bacillus subtilis (strain 168) protein is Regulatory protein MgsR.